The primary structure comprises 610 residues: Protein SAN1 (610 aa).

Positions 1–10 (MSESGQEQNR) are enriched in polar residues. Disordered stretches follow at residues 1–36 (MSES…NGGA) and 176–231 (VDST…PSIP). Low complexity predominate over residues 11-36 (GTNTSPNNAENNNNSNAASGPLNGGA). Over residues 194–203 (EGTKKRKDNE) the composition is skewed to basic and acidic residues. A compositionally biased stretch (polar residues) spans 210–223 (TADNDSNPSITNAT). The segment at 240-280 (NDEETNPSYKHSPIKLPCGHIFGRECIYKWSRLENSCPLCR) adopts an RING-type zinc-finger fold. Disordered stretches follow at residues 318–348 (TAVN…ASSG), 360–453 (VPQN…TDPH), 471–502 (GTSD…TTQG), 514–554 (GHFT…GVAS), and 569–610 (NNNS…RSSQ). Polar residues predominate over residues 319-348 (AVNSTNENSSAPSENTSNTTVPTIGNASSG). 2 stretches are compositionally biased toward low complexity: residues 384-406 (NGPS…NQSP) and 425-447 (PSAS…NTSS). Residues 471–492 (GTSDTSATTAPGAQTVHNQGRN) show a composition bias toward polar residues. The span at 493–502 (DSSSSDTTQG) shows a compositional bias: low complexity. 2 stretches are compositionally biased toward polar residues: residues 533 to 554 (QQRG…GVAS) and 592 to 610 (DTTI…RSSQ).

Functionally, plays a specific role in mating-type regulation of yeast, by acting post-translationally to control the stability or activity of the SIR4 proteins. The chain is Protein SAN1 (SAN1) from Saccharomyces cerevisiae (strain ATCC 204508 / S288c) (Baker's yeast).